The sequence spans 590 residues: Arginine--tRNA ligase, cytoplasmic (590 aa).

Ala2 carries the N-acetylalanine modification. L-arginine is bound by residues 137–139 (SPN), His148, Tyr322, Asp326, and Gln350. The 'HIGH' region motif lies at 138–149 (PNIAKEMHVGHL). The tract at residues 470–484 (DTAVYLLYAHARICS) is interaction with tRNA.

It belongs to the class-I aminoacyl-tRNA synthetase family.

Its subcellular location is the cytoplasm. The protein localises to the cytosol. The catalysed reaction is tRNA(Arg) + L-arginine + ATP = L-arginyl-tRNA(Arg) + AMP + diphosphate. In terms of biological role, forms part of a macromolecular complex that catalyzes the attachment of specific amino acids to cognate tRNAs during protein synthesis. This is Arginine--tRNA ligase, cytoplasmic from Arabidopsis thaliana (Mouse-ear cress).